Reading from the N-terminus, the 437-residue chain is Gamma-glutamyl phosphate reductase (437 aa).

The protein belongs to the gamma-glutamyl phosphate reductase family.

It localises to the cytoplasm. It catalyses the reaction L-glutamate 5-semialdehyde + phosphate + NADP(+) = L-glutamyl 5-phosphate + NADPH + H(+). The protein operates within amino-acid biosynthesis; L-proline biosynthesis; L-glutamate 5-semialdehyde from L-glutamate: step 2/2. Its function is as follows. Catalyzes the NADPH-dependent reduction of L-glutamate 5-phosphate into L-glutamate 5-semialdehyde and phosphate. The product spontaneously undergoes cyclization to form 1-pyrroline-5-carboxylate. In Synechococcus sp. (strain CC9902), this protein is Gamma-glutamyl phosphate reductase.